The chain runs to 167 residues: MSKNSVKDKAKSATANKTIALNKRARHEYHIEERFEAGLALQGWEVKSIRAGRGNIIDAYAYVKQGEIFLIGAQITPLIQASTHVVANDRRERKLLLHRSEIDKLVGKVERDGYTIVPTAMYWSKNKIKLEVALAKGKQTHDKRDAAKDRDWAIEKQRVMRRGNRDA.

It belongs to the SmpB family.

It is found in the cytoplasm. Functionally, required for rescue of stalled ribosomes mediated by trans-translation. Binds to transfer-messenger RNA (tmRNA), required for stable association of tmRNA with ribosomes. tmRNA and SmpB together mimic tRNA shape, replacing the anticodon stem-loop with SmpB. tmRNA is encoded by the ssrA gene; the 2 termini fold to resemble tRNA(Ala) and it encodes a 'tag peptide', a short internal open reading frame. During trans-translation Ala-aminoacylated tmRNA acts like a tRNA, entering the A-site of stalled ribosomes, displacing the stalled mRNA. The ribosome then switches to translate the ORF on the tmRNA; the nascent peptide is terminated with the 'tag peptide' encoded by the tmRNA and targeted for degradation. The ribosome is freed to recommence translation, which seems to be the essential function of trans-translation. This is SsrA-binding protein from Stenotrophomonas maltophilia (strain R551-3).